A 248-amino-acid chain; its full sequence is 3-deoxy-manno-octulosonate cytidylyltransferase (248 aa).

The protein belongs to the KdsB family.

The protein localises to the cytoplasm. The enzyme catalyses 3-deoxy-alpha-D-manno-oct-2-ulosonate + CTP = CMP-3-deoxy-beta-D-manno-octulosonate + diphosphate. Its pathway is nucleotide-sugar biosynthesis; CMP-3-deoxy-D-manno-octulosonate biosynthesis; CMP-3-deoxy-D-manno-octulosonate from 3-deoxy-D-manno-octulosonate and CTP: step 1/1. It participates in bacterial outer membrane biogenesis; lipopolysaccharide biosynthesis. In terms of biological role, activates KDO (a required 8-carbon sugar) for incorporation into bacterial lipopolysaccharide in Gram-negative bacteria. This is 3-deoxy-manno-octulosonate cytidylyltransferase from Enterobacter sp. (strain 638).